We begin with the raw amino-acid sequence, 511 residues long: Coatomer subunit delta (511 aa).

Residues 168 to 177 show a composition bias toward basic and acidic residues; it reads QARRDAERQG. The segment at 168-188 is disordered; sequence QARRDAERQGKKAPGFGGFGS. Serine 223 bears the Phosphoserine mark. An N6-acetyllysine mark is found at lysine 233 and lysine 241. The residue at position 244 (serine 244) is a Phosphoserine. The MHD domain maps to 271–511; the sequence is MESVHMKIEE…TFLVDKYEIL (241 aa). N6-acetyllysine occurs at positions 309 and 351. Serine 493 carries the post-translational modification Phosphoserine.

The protein belongs to the adaptor complexes medium subunit family. Delta-COP subfamily. In terms of assembly, oligomeric complex that consists of at least the alpha, beta, beta', gamma, delta, epsilon and zeta subunits.

It localises to the cytoplasm. The protein localises to the golgi apparatus membrane. It is found in the cytoplasmic vesicle. Its subcellular location is the COPI-coated vesicle membrane. Functionally, the coatomer is a cytosolic protein complex that binds to dilysine motifs and reversibly associates with Golgi non-clathrin-coated vesicles, which further mediate biosynthetic protein transport from the ER, via the Golgi up to the trans Golgi network. Coatomer complex is required for budding from Golgi membranes, and is essential for the retrograde Golgi-to-ER transport of dilysine-tagged proteins. In mammals, the coatomer can only be recruited by membranes associated to ADP-ribosylation factors (ARFs), which are small GTP-binding proteins; the complex also influences the Golgi structural integrity, as well as the processing, activity, and endocytic recycling of LDL receptors. This Mus musculus (Mouse) protein is Coatomer subunit delta (Arcn1).